Consider the following 122-residue polypeptide: MTSTVEFINRWQRIALLSQSLLELAQRGEWDLLLQQEVSYLQSIETVMEKQTPPGITRSIQDMVAGYIKQTLDNEQLLKGLLQQRLDELSSLIGQSTRQKSLNNAYGRLSGMLLVPDAPGAS.

Residues 1–50 form a required for homodimerization region; it reads MTSTVEFINRWQRIALLSQSLLELAQRGEWDLLLQQEVSYLQSIETVMEK. The tract at residues 60–98 is fliD binding; it reads IQDMVAGYIKQTLDNEQLLKGLLQQRLDELSSLIGQSTR.

The protein belongs to the FliT family. Homodimer. Interacts with FliD and FlhC.

It is found in the cytoplasm. Its subcellular location is the cytosol. Its function is as follows. Dual-function protein that regulates the transcription of class 2 flagellar operons and that also acts as an export chaperone for the filament-capping protein FliD. As a transcriptional regulator, acts as an anti-FlhDC factor; it directly binds FlhC, thus inhibiting the binding of the FlhC/FlhD complex to class 2 promoters, resulting in decreased expression of class 2 flagellar operons. As a chaperone, effects FliD transition to the membrane by preventing its premature polymerization, and by directing it to the export apparatus. The chain is Flagellar protein FliT from Salmonella schwarzengrund (strain CVM19633).